We begin with the raw amino-acid sequence, 640 residues long: Arogenate dehydrogenase 1, chloroplastic (640 aa).

The transit peptide at 1 to 18 (MAETLITKPPLSLSFTSL) directs the protein to the chloroplast. Prephenate/arogenate dehydrogenase domains lie at 53–334 (LRIA…GEND) and 365–640 (LKIG…LLTS).

Belongs to the prephenate/arogenate dehydrogenase family. Expressed in roots, stems, leaves, flowers, siliques and seeds. More abundant in seeds.

The protein localises to the plastid. The protein resides in the chloroplast. It carries out the reaction L-arogenate + NADP(+) = L-tyrosine + CO2 + NADPH. Its pathway is amino-acid biosynthesis; L-tyrosine biosynthesis; L-tyrosine from L-arogenate (NADP(+) route): step 1/1. Functionally, involved in the biosynthesis of tyrosine. Has no prephenate dehydrogenase activity. This chain is Arogenate dehydrogenase 1, chloroplastic (TYRAAT1), found in Arabidopsis thaliana (Mouse-ear cress).